The sequence spans 394 residues: Probable purine permease 8 (394 aa).

The next 10 helical transmembrane spans lie at 45–65, 77–97, 113–133, 139–159, 172–192, 208–228, 247–267, 289–309, 315–335, and 344–364; these read WLRISIYVFFVLACQALSTIL, TWMGTLVQLIGFPVLFLFRFF, FSSFTILGSVYIVTGLLVSAN, VGLLYLPVSTFSLILASQLAF, FTPFIVNSLFLLTISSALLVV, VIGIICTIGASAGIGLLLSLV, LVAYQSLVASCVVLIGLFASG, TLASIAISWQVYTIGVVGLIF, FSNSITAVGLPIVPVVAVIVF, and IFSIILAIWGFISFVYQHYLD. The disordered stretch occupies residues 373-394; the sequence is TSPVGDPHLLPAEEGHTNIHSV. The segment covering 383–394 has biased composition (basic and acidic residues); it reads PAEEGHTNIHSV.

It belongs to the purine permeases (TC 2.A.7.14) family.

The protein localises to the membrane. The polypeptide is Probable purine permease 8 (PUP8) (Arabidopsis thaliana (Mouse-ear cress)).